Reading from the N-terminus, the 53-residue chain is uncharacterized protein (53 aa).

This is an uncharacterized protein from Haemophilus influenzae (strain ATCC 51907 / DSM 11121 / KW20 / Rd).